Here is a 322-residue protein sequence, read N- to C-terminus: MMIKNKKKLLFLCLLVILIATAYISFVTGTIKLSFNDLFTKFTTGSNEAVDSIIDLRLPRILIALMVGAMLAVSGALLQAALQNPLAEANIIGVSSGALIMRALCMLFIPQLYFYLPLLSFIGGLIPFLIIIVLHSKFRFNAVSMILVGVALFVLLNGVLEILTQNPLMKIPQGLTMKIWSDVYILAVSALLGLILTLLLSLKLNLLNLDDVQARSIGFNIDRYRWLTGLLAVFLASATVAIVGQLAFLGIIVPHVVRKLVGGNYRVLIPFSTVIGAWLLLVADLLGRVIQPPLEIPANAILMIVGGPMLIYLICQSQRNRI.

A run of 9 helical transmembrane segments spans residues 9-29 (LLFLCLLVILIATAYISFVTG), 61-81 (ILIALMVGAMLAVSGALLQAA), 89-109 (ANIIGVSSGALIMRALCMLFI), 114-134 (FYLPLLSFIGGLIPFLIIIVL), 143-163 (VSMILVGVALFVLLNGVLEIL), 179-199 (IWSDVYILAVSALLGLILTLL), 233-253 (VFLASATVAIVGQLAFLGIIV), 267-287 (VLIPFSTVIGAWLLLVADLLG), and 294-314 (LEIPANAILMIVGGPMLIYLI).

This sequence belongs to the binding-protein-dependent transport system permease family. FecCD subfamily.

It localises to the cell membrane. In terms of biological role, part of the binding-protein-dependent transport system for heme-iron. Responsible for the translocation of the substrate across the membrane. This is Probable heme-iron transport system permease protein IsdF (isdF) from Staphylococcus aureus (strain bovine RF122 / ET3-1).